The primary structure comprises 759 residues: LIM domain and actin-binding protein 1 (759 aa).

Met1 bears the N-acetylmethionine mark. Residues Ser4, Ser15, and Ser55 each carry the phosphoserine modification. Residues 78-131 form a disordered region; it reads NPGLGAESHTDSLRNSSTEIRHRADHPPAEVTSHAASGAKADQEEQIHPRSRLR. The segment covering 96–105 has biased composition (basic and acidic residues); the sequence is EIRHRADHPP. Ser132 is modified (phosphoserine). Residues 146-177 are compositionally biased toward basic and acidic residues; the sequence is KDGEDLKDHSTESKKMENCLGESRHEVEKSEI. Residues 146 to 182 form a disordered region; it reads KDGEDLKDHSTESKKMENCLGESRHEVEKSEISENTD. Positions 164-166 match the Required for interaction with NPC1L1 motif; it reads CLG. Phosphoserine is present on residues Ala183 and Ser225. Disordered stretches follow at residues 211–264 and 323–381; these read ILRA…RLSE and EKIS…AMKK. Tyr229 carries the post-translational modification Phosphotyrosine. A phosphoserine mark is found at Ser230 and Ser242. Over residues 247–258 the composition is skewed to basic and acidic residues; the sequence is DSEKNESRRNLE. Ser263, Ser343, Ser350, Ser362, Ser365, Ser369, and Ser374 each carry phosphoserine. Residues 362–376 show a composition bias toward low complexity; the sequence is SPDSRASSLSESSPP. Positions 388–448 constitute an LIM zinc-binding domain; the sequence is ETCVECQKTV…KPHFNQLFKS (61 aa). At Lys439 the chain carries N6-succinyllysine. Residue Ser490 is modified to Phosphoserine. The required for interaction with MYO5B stretch occupies residues 493 to 513; the sequence is VEDAPIAKVGVLAASMEAKAS. The segment at 509 to 709 is disordered; sequence EAKASSQQEK…QEPKSLNWSS (201 aa). Basic and acidic residues-rich tracts occupy residues 516–527 and 556–567; these read QEKEDKPAETKK and WPPEDEISKPEV. Polar residues predominate over residues 595–607; it reads ASFQSTSVKSPKT. Residues Ser601, Ser604, Ser609, and Ser617 each carry the phosphoserine modification. The segment covering 644 to 655 has biased composition (polar residues); the sequence is KNGNVGKTTWQN. The span at 656-673 shows a compositional bias: basic and acidic residues; that stretch reads KESKGETGKRSKEGHSLE. Over residues 674 to 691 the composition is skewed to acidic residues; sequence MENENLVENGADSDEDDN. Ser686, Ser692, Ser698, Ser726, and Ser741 each carry phosphoserine. Residues 693–709 are compositionally biased toward polar residues; sequence FLKQQSPQEPKSLNWSS.

In terms of assembly, interacts with NPC1L1; bridges NPC1L1 with MYO5B. Interacts with MYO5B; bridges NPC1L1 with MYO5B. Interacts with PXN; this complex stabilizes actin dynamics. Interacts with F-actin and G-actin. Interacts with LUZP1 (via C-terminus); both proteins restrict ciliation and may work together to regulate this process. Binds RAB40B (GTP-bound); interaction influences LIMA1 subcellular localization in lamellipodia during cell migration. In terms of processing, ubiquitinated by the ECS(RAB40B) complex leading to its degradation. Post-translationally, phosphorylation of the C-terminal region by MAPK1/MAPK3 reduces its association with F-actin and contributes to actin filament reorganization and enhances cell motility. Highly expressed in placenta, kidney, pancreas, prostate, ovary, spleen and heart. Also detected in lung, liver, brain, skeletal muscle, thymus, testis and intestine. Not detected in leukocytes. Isoform Beta expressed generally at very low levels. Isoform Alpha abundant in epithelial cells from mammary gland, prostate and in normal oral keratinocytes. Low levels in aortic endothelial cells and dermal fibroblasts. Not detectable in myocardium.

It localises to the cytoplasm. The protein localises to the cell junction. The protein resides in the focal adhesion. Its subcellular location is the cytoskeleton. It is found in the stress fiber. It localises to the cell membrane. The protein localises to the cell projection. The protein resides in the ruffle. Its subcellular location is the lamellipodium. Functionally, actin-binding protein involved in actin cytoskeleton regulation and dynamics. Increases the number and size of actin stress fibers and inhibits membrane ruffling. Inhibits actin filament depolymerization. Bundles actin filaments, delays filament nucleation and reduces formation of branched filaments. Acts as a negative regulator of primary cilium formation. Plays a role in cholesterol homeostasis. Influences plasma cholesterol levels through regulation of intestinal cholesterol absorption. May act as a scaffold protein by regulating NPC1L1 transportation, an essential protein for cholesterol absorption, to the plasma membrane by recruiting MYO5B to NPC1L1, and thus facilitates cholesterol uptake. The sequence is that of LIM domain and actin-binding protein 1 from Homo sapiens (Human).